Consider the following 284-residue polypeptide: Release factor glutamine methyltransferase (284 aa).

Residues 121 to 125, Asp144, Trp172, and Asn188 contribute to the S-adenosyl-L-methionine site; that span reads GTGTG. 188 to 191 contributes to the substrate binding site; it reads NPPY.

It belongs to the protein N5-glutamine methyltransferase family. PrmC subfamily.

The catalysed reaction is L-glutaminyl-[peptide chain release factor] + S-adenosyl-L-methionine = N(5)-methyl-L-glutaminyl-[peptide chain release factor] + S-adenosyl-L-homocysteine + H(+). Functionally, methylates the class 1 translation termination release factors RF1/PrfA and RF2/PrfB on the glutamine residue of the universally conserved GGQ motif. The protein is Release factor glutamine methyltransferase of Aliivibrio fischeri (strain ATCC 700601 / ES114) (Vibrio fischeri).